The primary structure comprises 483 residues: Altronate oxidoreductase (483 aa).

18–29 contacts NAD(+); it reads IIQFGEGNFLRA.

It belongs to the mannitol dehydrogenase family. UxaB subfamily.

It catalyses the reaction D-altronate + NAD(+) = keto-D-tagaturonate + NADH + H(+). The protein operates within carbohydrate metabolism; pentose and glucuronate interconversion. This is Altronate oxidoreductase from Escherichia coli O7:K1 (strain IAI39 / ExPEC).